Here is a 575-residue protein sequence, read N- to C-terminus: Bifunctional decalin synthase calF (575 aa).

Residues methionine 1–glycine 18 form the signal peptide. 9 N-linked (GlcNAc...) asparagine glycosylation sites follow: asparagine 46, asparagine 103, asparagine 127, asparagine 175, asparagine 268, asparagine 308, asparagine 359, asparagine 425, and asparagine 485. Residues leucine 118–aspartate 297 form the FAD-binding PCMH-type domain.

The protein belongs to the oxygen-dependent FAD-linked oxidoreductase family.

It functions in the pathway secondary metabolite biosynthesis. Its function is as follows. Bifunctional decaline synthase; part of the gene cluster that mediates the biosynthesis of calbistrin A and related compounds. Calbistrin A is a secondary metabolite with an interesting structure that was recently found to have bioactivity against leukemia cells. It consists of two polyketides linked by an ester bond: a bicyclic decalin containing polyketide and a linear 12 carbon dioic acid structure. The polyketide synthase calA is probably responsible for forming the decalin moiety. Because calA lacks a designated enoylreductase (ER) domain, the required activity is provided by the trans-enoyl reductase calK. Following release from the PKS, calF then probably catalyzes the oxidation and the subsequent Diels Alder cycloisomerization that lead to the formation of the decalin moiety. The decalin polyketide backbone includes two C-methyl groups, at C7 and C11 in backbone, of which the C7 position is probably methylated by the methyltransferase domain of calA. A candidate for adding the methyl group at C11, if not done by CalA, is the cluster methyltransferase calH. Several additional tailoring enzymes within the cluster could be involved in the modification of the decalin polyketide product. Those include the 3 cytochrome P450 monooxygenases CalE, CalG and CalL, of which one might be responsible for the introduction of the extra hydroxyl group attached to the backbone of the decalin moiety, at position C9 in the backbone, that allows for attachment of the linear moiety. One tailoring enzyme activity that is expected to be involved in biosynthesis of calbistrin is an acyltransferase for connecting the two polyketide synthase products, and which could be performed by the cluster acyltransferase calJ. The enzyme responsible for the biosynthesis of the linear moiety, probably a second PKS, has not been identified yet. This Penicillium decumbens protein is Bifunctional decalin synthase calF.